Reading from the N-terminus, the 1000-residue chain is MSYDYHQSWSRDGGPRGSGQGSGGGGGGSRGSGGGGGGRGGRGRHPAHLKGREIGLWYAKKQTQKNKEAERQERAVVHMDERREEQIVQLLNSVQAKNDKDSEAQISWFAPEDHGYGTEVSSEKKINSEKKLDNQEKKLLNQEKKTYRITDKSYIDRDSEYLLQQNEPNLGLDQQLLEDLQKKKTDPRYIEMQRFRKKLPSYGMQKELVNLINNHQVTVISGETGCGKTTQVTQFILDNYIERGIGSACRIVCTQPRRISAISVAERVAAERAESCGNGNSTGYQIRLQSRLPRKQGSILYCTTGIILQWLQSDSRLSSVSHIVLDEIHERNLQSDVLMTVIKDLLHFRSDLKVILMSATLNAEKFSEYFGNCPMIHIPGFTFPVVEYLLEDIIEKIRYFPEQKEHRSQFKRGFMQGHVNRQEKEEKEAIYKERWPAYIKELQTRYSASTIDVLEMMDDDKVDLNLIAALIRYIVLEEEDGAILVFLPGWDNISTLHDLLMSQVMFKSDRFLIIPLHSLMPTVNQTQVFKKTPPGVRKIVIATNIAETSITIDDVVYVIDGGKIKETHFDTQNNISTMSAEWVSKANAKQRKGRAGRVQPGHCYHLYNGLRASLLDDYQLPEILRTPLEELCLQIKILRLGGIAYFLSRLMDPPSDEAVVLSIKHLMELSALDKQEELTPLGVHLARLPVEPHIGKMILFGALFCCLDPVLTIAASLSFKDPFVIPLGKEKIADARRKELAKETRSDHLTVVNAFEGWEEAKRRGFRYEKDYCWEYFLSSNTLQMLHNMKGQFAEHLLGAGFVSSRSPKDPKANINSDNEKIIKAVICAGLYPKVAKIRLNLGKKRKMVKVHTKSDGLVSIHPKSVNVEQTDFHYNWLIYHLKMRTSSIYLYDCTEVSPYCLLFFGGDISIQKDKDQEIIAVDEWIVFQSPERIAHLVKGLRKELDILLQEKIECPHPVDWNDTKSRDCAVLSAILDLIKTQEKAIPRNLPPRSQDGYYS.

Residues 1–43 (MSYDYHQSWSRDGGPRGSGQGSGGGGGGSRGSGGGGGGRGGRG) are required for recruitment to cytoplasmic stress granules. The interval 1 to 53 (MSYDYHQSWSRDGGPRGSGQGSGGGGGGSRGSGGGGGGRGGRGRHPAHLKGRE) is disordered. The interval 1 to 96 (MSYDYHQSWS…IVQLLNSVQA (96 aa)) is required for the pre-miR-134 transport. The interval 1-192 (MSYDYHQSWS…KKTDPRYIEM (192 aa)) is necessary for nuclear and nucleolar caps localizations. The segment covering 15–40 (PRGSGQGSGGGGGGSRGSGGGGGGRG) has biased composition (gly residues). Positions 45-67 (HPAHLKGREIGLWYAKKQTQKNK) are DSM (DHX36-specific motif). The required for G4-DNA- and G4-RNA-binding stretch occupies residues 45 to 97 (HPAHLKGREIGLWYAKKQTQKNKEAERQERAVVHMDERREEQIVQLLNSVQAK). RecA-like domain stretches follow at residues 98-378 (NDKD…MIHI) and 379-620 (PGFT…DYQL). Serine 153 carries the phosphoserine modification. One can recognise a Helicase ATP-binding domain in the interval 209–379 (VNLINNHQVT…FGNCPMIHIP (171 aa)). 225-230 (GCGKTT) contacts ATP. A necessary for interaction with single-stranded DNA at the 3'-end of the G4-DNA structure region spans residues 257 to 309 (RRISAISVAERVAAERAESCGNGNSTGYQIRLQSRLPRKQGSILYCTTGIILQ). Residues 326 to 329 (DEIH) carry the DEAH box motif. 2 residues coordinate Mg(2+): glutamate 327 and histidine 329. The region spanning 469-639 (ALIRYIVLEE…ELCLQIKILR (171 aa)) is the Helicase C-terminal domain. Residues 490–549 (WDNISTLHDLLMSQVMFKSDRFLIIPLHSLMPTVNQTQVFKKTPPGVRKIVIATNIAETS) are necessary for interaction with single-stranded DNA at the 3'-end of the G4-DNA structure. A Nuclear localization signal motif is present at residues 509 to 520 (DRFLIIPLHSLM). ATP-binding positions include serine 549 and 594–597 (RAGR). Residues 621-690 (PEILRTPLEE…LGVHLARLPV (70 aa)) are WH domain. Necessary for interaction with single-stranded DNA at the 3'-end of the G4-DNA structure stretches follow at residues 630 to 689 (ELCL…ARLP), 841 to 852 (NLGKKRKMVKVH), and 862 to 892 (HPKS…IYLY). The interval 833 to 897 (PKVAKIRLNL…SIYLYDCTEV (65 aa)) is OB-fold-like subdomains. Lysine 939 carries the N6-acetyllysine modification.

In terms of assembly, found in a multi-helicase-TICAM1 complex at least composed of DHX36, DDX1, DDX21 and TICAM1; this complex exists in resting cells with or without dsRNA poly(I:C) ligand stimulation. Interacts (via C-terminus) with TICAM1 (via TIR domain). Interacts (via C-terminus) with DDX21; this interaction serves as bridges to TICAM1. Interacts with TERT; this interaction is dependent on the ability of DHX36 to bind to the G-quadruplex RNA (G4-RNA) structure present in the telomerase RNA template component (TERC). Interacts with DKC1; this interaction is dependent on the ability of DHX36 to bind to the G4-RNA structure present in TERC. Interacts with PARN; this interaction stimulates PARN to enhance uPA mRNA decay. Interacts with EXOSC3; this interaction occurs in a RNase-insensitive manner. Interacts with EXOSC10; this interaction occurs in a RNase-insensitive manner. Interacts with ILF3; this interaction occurs in a RNA-dependent manner. Interacts with ELAVL1; this interaction occurs in an RNA-dependent manner. Interacts with DDX5; this interaction occurs in a RNA-dependent manner. Interacts with DDX17; this interaction occurs in a RNA-dependent manner. Interacts with HDAC1; this interaction occurs in a RNA-dependent manner. Interacts with HDAC3; this interaction occurs in a RNA-dependent manner. Interacts with HDAC4. Interacts with AGO1. Interacts with AGO2. Interacts with ERCC6. Requires Mg(2+) as cofactor.

Its subcellular location is the nucleus. The protein resides in the cytoplasm. It localises to the cytosol. The protein localises to the stress granule. It is found in the nucleus speckle. Its subcellular location is the chromosome. The protein resides in the telomere. It localises to the mitochondrion. The protein localises to the perikaryon. It is found in the cell projection. Its subcellular location is the dendrite. The protein resides in the axon. The enzyme catalyses ATP + H2O = ADP + phosphate + H(+). ATPase activity is enhanced in the presence of homomeric poly(U) RNAs, but not by double-stranded DNA (dsDNA), double-stranded RNA (dsRNA) and tRNA. Multifunctional ATP-dependent helicase that unwinds G-quadruplex (G4) structures. Plays a role in many biological processes such as genomic integrity, gene expression regulations and as a sensor to initiate antiviral responses. G4 structures correspond to helical structures containing guanine tetrads. Binds with high affinity to and unwinds G4 structures that are formed in nucleic acids (G4-DNA and G4-RNA). Plays a role in genomic integrity. Converts the G4-RNA structure present in telomerase RNA template component (TREC) into a double-stranded RNA to promote P1 helix formation that acts as a template boundary ensuring accurate reverse transcription. Plays a role in transcriptional regulation. Resolves G4-DNA structures in promoters of genes, such as YY1, KIT/c-kit and ALPL and positively regulates their expression. Plays a role in post-transcriptional regulation. Unwinds a G4-RNA structure located in the 3'-UTR polyadenylation site of the pre-mRNA TP53 and stimulates TP53 pre-mRNA 3'-end processing in response to ultraviolet (UV)-induced DNA damage. Binds to the precursor-microRNA-134 (pre-miR-134) terminal loop and regulates its transport into the synapto-dendritic compartment. Involved in the pre-miR-134-dependent inhibition of target gene expression and the control of dendritic spine size. Plays a role in the regulation of cytoplasmic mRNA translation and mRNA stability. Binds to both G4-RNA structures and alternative non-quadruplex-forming sequence within the 3'-UTR of the PITX1 mRNA regulating negatively PITX1 protein expression. Binds to both G4-RNA structure in the 5'-UTR and AU-rich elements (AREs) localized in the 3'-UTR of NKX2-5 mRNA to either stimulate protein translation or induce mRNA decay in an ELAVL1-dependent manner, respectively. Also binds to ARE sequences present in several mRNAs mediating exosome-mediated 3'-5' mRNA degradation. Involved in cytoplasmic urokinase-type plasminogen activator (uPA) mRNA decay. Component of a multi-helicase-TICAM1 complex that acts as a cytoplasmic sensor of viral double-stranded RNA (dsRNA) and plays a role in the activation of a cascade of antiviral responses including the induction of pro-inflammatory cytokines via the adapter molecule TICAM1. Required for the early embryonic development and hematopoiesis. Involved in the regulation of cardioblast differentiation and proliferation during heart development. Involved in spermatogonia differentiation. May play a role in ossification. The sequence is that of ATP-dependent DNA/RNA helicase DHX36 from Rattus norvegicus (Rat).